We begin with the raw amino-acid sequence, 326 residues long: Adenosine receptor A1 (326 aa).

At 1 to 10 (MPHSVSAFQA) the chain is on the extracellular side. Residues 11 to 33 (AYIGIEVLIALVSVPGNVLVIWA) traverse the membrane as a helical segment. Over 34–46 (VKVNQALRDATFC) the chain is Cytoplasmic. Residues 47 to 69 (FIASLAVADVAVGALVIPLAILI) traverse the membrane as a helical segment. Topologically, residues 70–80 (NIGPQTYFHTC) are extracellular. A disulfide bond links C80 and C169. Residues 81-102 (LMVACPVLILTQSSILALLAIA) form a helical membrane-spanning segment. Topologically, residues 103-123 (VDRYLRVKIPLRYKTVVTPRR) are cytoplasmic. Residues 124–146 (AAVAIAGCWILSLVVGLTPMFGW) form a helical membrane-spanning segment. The Extracellular segment spans residues 147–176 (NNLSKIEMAWAANGSVGEPVIKCEFEKVIS). N-linked (GlcNAc...) asparagine glycosylation is present at N159. The chain crosses the membrane as a helical span at residues 177 to 201 (MEYMVYFNFFVWVLPPLLLMVLIYL). At 202–235 (EVFYLIRKQLSKKVSASSGDPQKYYGKELKIAKS) the chain is on the cytoplasmic side. A helical membrane pass occupies residues 236-259 (LALILFLFALSWLPLHILNCITLF). Residues 260–267 (CPTCHKPT) are Extracellular-facing. A helical membrane pass occupies residues 268–292 (ILTYIAIFLTHGNSAMNPIVYAFRI). Over 293-326 (QKFRVTFLKIWNDHFRCQPEPPIDEDLPEEKVDD) the chain is Cytoplasmic. C309 carries S-palmitoyl cysteine lipidation.

It belongs to the G-protein coupled receptor 1 family.

It localises to the cell membrane. Functionally, receptor for adenosine. The activity of this receptor is mediated by G proteins which inhibit adenylyl cyclase. This is Adenosine receptor A1 (ADORA1) from Cavia porcellus (Guinea pig).